We begin with the raw amino-acid sequence, 189 residues long: Elongation factor P (189 aa).

It belongs to the elongation factor P family.

The protein localises to the cytoplasm. It participates in protein biosynthesis; polypeptide chain elongation. Involved in peptide bond synthesis. Stimulates efficient translation and peptide-bond synthesis on native or reconstituted 70S ribosomes in vitro. Probably functions indirectly by altering the affinity of the ribosome for aminoacyl-tRNA, thus increasing their reactivity as acceptors for peptidyl transferase. The chain is Elongation factor P from Phytoplasma australiense.